The primary structure comprises 391 residues: Phosphoglycerate kinase (391 aa).

Substrate contacts are provided by residues 21-23 (DLN), arginine 36, 59-62 (HLGR), arginine 113, and arginine 146. ATP-binding positions include lysine 197, glutamate 319, and 345-348 (GGDT).

It belongs to the phosphoglycerate kinase family. As to quaternary structure, monomer.

It is found in the cytoplasm. The enzyme catalyses (2R)-3-phosphoglycerate + ATP = (2R)-3-phospho-glyceroyl phosphate + ADP. It participates in carbohydrate degradation; glycolysis; pyruvate from D-glyceraldehyde 3-phosphate: step 2/5. This chain is Phosphoglycerate kinase, found in Stenotrophomonas maltophilia (strain K279a).